The primary structure comprises 490 residues: 23S rRNA (uracil(1939)-C(5))-methyltransferase RlmD (490 aa).

Positions 14 to 75 (APAPAEYPID…SSFEKATLTA (62 aa)) constitute a TRAM domain. Cys88, Cys98, Cys101, and Cys180 together coordinate [4Fe-4S] cluster. Residues Gln289, Phe318, Asn323, Glu339, Asn374, and Asp395 each coordinate S-adenosyl-L-methionine. The active-site Nucleophile is the Cys446.

It belongs to the class I-like SAM-binding methyltransferase superfamily. RNA M5U methyltransferase family. RlmD subfamily.

It carries out the reaction uridine(1939) in 23S rRNA + S-adenosyl-L-methionine = 5-methyluridine(1939) in 23S rRNA + S-adenosyl-L-homocysteine + H(+). Functionally, catalyzes the formation of 5-methyl-uridine at position 1939 (m5U1939) in 23S rRNA. The sequence is that of 23S rRNA (uracil(1939)-C(5))-methyltransferase RlmD from Polaromonas naphthalenivorans (strain CJ2).